Here is a 255-residue protein sequence, read N- to C-terminus: 1-(5-phosphoribosyl)-5-[(5-phosphoribosylamino)methylideneamino] imidazole-4-carboxamide isomerase (255 aa).

The active-site Proton acceptor is Asp-8. Asp-129 serves as the catalytic Proton donor.

This sequence belongs to the HisA/HisF family.

It localises to the cytoplasm. The catalysed reaction is 1-(5-phospho-beta-D-ribosyl)-5-[(5-phospho-beta-D-ribosylamino)methylideneamino]imidazole-4-carboxamide = 5-[(5-phospho-1-deoxy-D-ribulos-1-ylimino)methylamino]-1-(5-phospho-beta-D-ribosyl)imidazole-4-carboxamide. The protein operates within amino-acid biosynthesis; L-histidine biosynthesis; L-histidine from 5-phospho-alpha-D-ribose 1-diphosphate: step 4/9. This chain is 1-(5-phosphoribosyl)-5-[(5-phosphoribosylamino)methylideneamino] imidazole-4-carboxamide isomerase, found in Synechococcus sp. (strain CC9902).